A 235-amino-acid polypeptide reads, in one-letter code: MTGDINKLFMRATRKAMIGWETNLTADEIVQELWVWYLESPYIQKKLGELRPGEAVIYVRKQVHNILSGSAKARDLFQERSHYSSDNVKDALRGESTNRYLVDILPLAMKELGSKNERHAEAIRVRYDDGVVPERGSAAEAMLKRAVKSLTEHVNIIAITAGVERDDNGKVIVKDGPGSKHAIFPDIRKVQGEGHSDPTANIAIMLVEHPGLRDEYLYEPPIPEFLGGRCYAKSA.

The sequence is that of Gene 53 protein (53) from Mycobacterium phage D29 (Mycobacteriophage D29).